Consider the following 216-residue polypeptide: Glycerol-3-phosphate acyltransferase (216 aa).

Helical transmembrane passes span Phe-3–Ala-23, Ile-48–Val-68, Phe-82–Phe-102, Phe-112–Val-132, Leu-142–Leu-162, and Glu-166–His-186.

Belongs to the PlsY family. In terms of assembly, probably interacts with PlsX.

The protein resides in the cell inner membrane. It catalyses the reaction an acyl phosphate + sn-glycerol 3-phosphate = a 1-acyl-sn-glycero-3-phosphate + phosphate. Its pathway is lipid metabolism; phospholipid metabolism. Its function is as follows. Catalyzes the transfer of an acyl group from acyl-phosphate (acyl-PO(4)) to glycerol-3-phosphate (G3P) to form lysophosphatidic acid (LPA). This enzyme utilizes acyl-phosphate as fatty acyl donor, but not acyl-CoA or acyl-ACP. The protein is Glycerol-3-phosphate acyltransferase of Leptospira interrogans serogroup Icterohaemorrhagiae serovar Lai (strain 56601).